Consider the following 169-residue polypeptide: MICLVLTIFAHIFPSAWTGINERTFLAIKPDGYQRRLVGEIIRRFEKKGFCLVALKIMQASEKLLRQHYIALQDKPFYDRLVKYMGSGPVVAMVWQGLDVVKTARVMIGETNPAHSLPGTIRGDFCIDVGRNVIHGSDSRESAQREIALWFQPDELVCWQDSAERWIYE.

Residues K29, R105, T111, R122, V129, and N132 each coordinate ADP. H135 acts as the Pros-phosphohistidine intermediate in catalysis.

This sequence belongs to the NDK family. As to quaternary structure, homohexamer. The cofactor is Mg(2+).

It is found in the mitochondrion outer membrane. Its subcellular location is the cytoplasm. The protein localises to the cytoskeleton. It localises to the cilium basal body. It carries out the reaction a 2'-deoxyribonucleoside 5'-diphosphate + ATP = a 2'-deoxyribonucleoside 5'-triphosphate + ADP. The enzyme catalyses a ribonucleoside 5'-diphosphate + ATP = a ribonucleoside 5'-triphosphate + ADP. Its function is as follows. Catalyzes the phosphorylation of ribonucleosides and deoxyribonucleoside diphosphates, other than ATP, into the corresponding triphosphates with ATP as the major phosphate donor. The ATP gamma phosphate is transferred to the nucleoside diphosphate beta phosphate via a ping-pong mechanism, using a phosphorylated active-site intermediate. Through the catalyzed exchange of gamma-phosphate between di- and triphosphonucleosides participates in regulation of intracellular nucleotide homeostasis. Required for ciliary function during renal development. Independently of its kinase activity, facilitates mitochondrial tethering prior to membrane fusion through its direct membrane-binding and hexamerization. Implicated in repair of both single- and double-stranded breaks in DNA, independently of its kinase activity. The protein is Nucleoside diphosphate kinase 3-A of Xenopus laevis (African clawed frog).